The sequence spans 229 residues: Glutathione S-transferase 3 (229 aa).

A2 carries the post-translational modification Blocked amino end (Ala). The GST N-terminal domain maps to 3 to 83; it reads AKPVLYYFNG…YIAGKYNLYG (81 aa). Residues Y9, 54–55, and 67–68 contribute to the glutathione site; these read QV and QT. The GST C-terminal domain maps to 85 to 207; it reads DLKERALIDM…LAPGSKRKPI (123 aa).

It belongs to the GST superfamily. Alpha family. In terms of assembly, homodimer or heterodimer (with a subunit from group CL-4).

Its subcellular location is the cytoplasm. The enzyme catalyses RX + glutathione = an S-substituted glutathione + a halide anion + H(+). Catalyzes the conjugation of GSH to a wide variety of electrophilic alkylating agents. Also involved in the metabolism of lipid hydroperoxides, prostaglandins and leukotriene A4 and in binding of non-substrate hydrophobic ligands such as bile acids, a number of drugs and thyroid hormones. This GST does not exhibit peroxidase activity. This is Glutathione S-transferase 3 from Gallus gallus (Chicken).